Consider the following 254-residue polypeptide: Imidazole glycerol phosphate synthase subunit HisF (254 aa).

Residues Asp12 and Asp131 contribute to the active site.

It belongs to the HisA/HisF family. In terms of assembly, heterodimer of HisH and HisF.

It is found in the cytoplasm. The catalysed reaction is 5-[(5-phospho-1-deoxy-D-ribulos-1-ylimino)methylamino]-1-(5-phospho-beta-D-ribosyl)imidazole-4-carboxamide + L-glutamine = D-erythro-1-(imidazol-4-yl)glycerol 3-phosphate + 5-amino-1-(5-phospho-beta-D-ribosyl)imidazole-4-carboxamide + L-glutamate + H(+). It participates in amino-acid biosynthesis; L-histidine biosynthesis; L-histidine from 5-phospho-alpha-D-ribose 1-diphosphate: step 5/9. Its function is as follows. IGPS catalyzes the conversion of PRFAR and glutamine to IGP, AICAR and glutamate. The HisF subunit catalyzes the cyclization activity that produces IGP and AICAR from PRFAR using the ammonia provided by the HisH subunit. In Herminiimonas arsenicoxydans, this protein is Imidazole glycerol phosphate synthase subunit HisF.